A 425-amino-acid polypeptide reads, in one-letter code: MPLLWLRGFLLASCWIIVRSSPTPGSEGHSAAPDCPSCALATLPKDVPNSQPEMVEAVKKHILNMLHLKKRPDVTQPVPKAALLNAIRKLHVGKVGENGYVEIEDDIGRRAEMNELMEQTSEIITFAESGTARKTLHFEISQEGSDLSVVERAEIWLFLKVPKANRTRSKVTIRLFQQQKHLQGSLDAGEEAEEVGLKGEKSEMLISEKVVDARKSTWHIFPVSSCIQRLLDQGKSSLDIRIACEQCQETGASLVLLGKKKRKEEEGEGKKRDGEGGAGGDEEKEQSHRPFLMLQARQSEDHPHRRRRRGLECDGKVNICCKKQFYVSFKDIGWNDWIIAPSGYHANYCEGECPSHIAGTSGSSLSFHSTVINHYRMRGHSPFANLKSCCVPTKLRPMSMLYYDDGQNIIKKDIQNMIVEECGCS.

Residues 1–20 (MPLLWLRGFLLASCWIIVRS) form the signal peptide. Positions 21-309 (SPTPGSEGHS…EDHPHRRRRR (289 aa)) are excised as a propeptide. N165 carries N-linked (GlcNAc...) asparagine glycosylation. The disordered stretch occupies residues 260 to 289 (KKRKEEEGEGKKRDGEGGAGGDEEKEQSHR). Positions 263–275 (KEEEGEGKKRDGE) are enriched in basic and acidic residues. Cystine bridges form between C313/C321, C320/C390, C349/C422, and C353/C424.

Belongs to the TGF-beta family. As to quaternary structure, dimeric, linked by one or more disulfide bonds. Inhibin A is a dimer of alpha/INHA and beta-A/INHBA. Activin A is a homodimer of beta-A/INHBA. Activin AB is a dimer of beta-A/INHBA and beta-B/INHBB. Interacts with FST and FSTL3; these interactions prevent activin A interaction to its type II receptor. Activin A interacts with ACVR2A. Activin A interacts with BMPR2. Inhibin A interacts with ACVR1; this interaction creates a non-signaling complex (NSC) that inhibits ACVR1-mediated BMP signaling. Inhibin A interacts with ACVR2A.

The protein resides in the secreted. Its function is as follows. Inhibins/activins are involved in regulating a number of diverse functions such as hypothalamic and pituitary hormone secretion, gonadal hormone secretion, germ cell development and maturation, erythroid differentiation, insulin secretion, nerve cell survival, embryonic axial development or bone growth, depending on their subunit composition. Functionally, activin A is a homodimer of INHBA that plays a role in several essential biological processes including embryonic development, stem cell maintenance and differentiation, haematopoiesis, cell proliferation and tissue fibrosis. Signals through type I (such as ACVR1B or ACVR1C) and type II receptors (such as ACVR2A, ACVR2B or BMPR2) which, upon ligand binding, phosphorylate SMAD2 and SMAD3 intracellular signaling mediators that form a complex with SMAD4, translocate to the nucleus and modulate gene expression. Can also activate alternative non-canonical intracellular signaling pathways including the p38 MAPK, extracellular signal-regulated kinases 1/2 (ERK1/2) and c-Jun N-terminal kinases (JNKs) to modulate cell migration and differentiation. Alternatively, promotes osteoblastic differentiation via ACVRL1-SMAD1/5/9 pathway. In addition, can engage the type I receptor ACVR1 to form an ACVR1-activin A-type II receptor non-signaling complex (NSC) that renders receptors unavailable for engagement with BMPs, hence resulting in an apparent inhibition of ACVR1-mediated BMP signaling. In terms of biological role, inhibin A is a dimer of alpha/INHA and beta-A/INHBA that functions as a feedback regulator in the hypothalamic-pituitary-gonadal (HPG) axis. Inhibits the secretion of FSH from the anterior pituitary gland by acting on pituitary gonadotrope cells. Antagonizes activin A by binding to the proteoglycan, betaglycan, and forming a stable complex with and, thereby, sequestering type II activin receptors while excluding type I receptor. This is Inhibin beta A chain (INHBA) from Ovis aries (Sheep).